The following is a 189-amino-acid chain: Cytochrome b6-f complex subunit 4 (189 aa).

3 helical membrane passes run 36-56, 103-123, and 139-159; these read LSYIFPVVILGTIACTIGLAV, LLGVLLMASVPAGSLTVPFLE, and TVSLIGTAVALWLGIGAALPI.

This sequence belongs to the cytochrome b family. PetD subfamily. As to quaternary structure, the 4 large subunits of the cytochrome b6-f complex are cytochrome b6, subunit IV (17 kDa polypeptide, petD), cytochrome f and the Rieske protein, while the 4 small subunits are petG, petL, petM and petN. The complex functions as a dimer.

The protein localises to the plastid. The protein resides in the chloroplast thylakoid membrane. Component of the cytochrome b6-f complex, which mediates electron transfer between photosystem II (PSII) and photosystem I (PSI), cyclic electron flow around PSI, and state transitions. The polypeptide is Cytochrome b6-f complex subunit 4 (Pinus koraiensis (Korean pine)).